The chain runs to 205 residues: Microtubule-associated protein Jupiter (205 aa).

S30 is subject to Phosphoserine. Phosphothreonine is present on residues T41, T98, and T102. Residues 124-135 are compositionally biased toward polar residues; it reads LISNSKGNYNGK. A disordered region spans residues 124–205; it reads LISNSKGNYN…PPGGYSSGLW (82 aa). Residues 136-149 are compositionally biased toward low complexity; sequence SGSVSSASSSVSSS. Residues S138 and S149 each carry the phosphoserine modification. Residues 181 to 191 show a composition bias toward polar residues; the sequence is PANNGSSQVIN.

It belongs to the MAP Jupiter family.

Its subcellular location is the nucleus. The protein resides in the cytoplasm. The protein localises to the cytoskeleton. It localises to the spindle. Functionally, binds to all microtubule populations. The sequence is that of Microtubule-associated protein Jupiter from Drosophila virilis (Fruit fly).